The chain runs to 416 residues: Gamma-glutamyl phosphate reductase (416 aa).

This sequence belongs to the gamma-glutamyl phosphate reductase family.

Its subcellular location is the cytoplasm. It catalyses the reaction L-glutamate 5-semialdehyde + phosphate + NADP(+) = L-glutamyl 5-phosphate + NADPH + H(+). Its pathway is amino-acid biosynthesis; L-proline biosynthesis; L-glutamate 5-semialdehyde from L-glutamate: step 2/2. Catalyzes the NADPH-dependent reduction of L-glutamate 5-phosphate into L-glutamate 5-semialdehyde and phosphate. The product spontaneously undergoes cyclization to form 1-pyrroline-5-carboxylate. In Halalkalibacterium halodurans (strain ATCC BAA-125 / DSM 18197 / FERM 7344 / JCM 9153 / C-125) (Bacillus halodurans), this protein is Gamma-glutamyl phosphate reductase.